Here is a 187-residue protein sequence, read N- to C-terminus: ECF RNA polymerase sigma factor SigK (187 aa).

The tract at residues 30-96 is sigma-70 factor domain-2; it reads YDHTKSRVYG…RAVDRVRCEQ (67 aa). The Interaction with polymerase core subunit RpoC signature appears at 53–56; the sequence is ETTQ. The sigma-70 factor domain-4 stretch occupies residues 133–182; sequence CLKALTDTQRQCIELAYYGGLTYVEVSRRLAANLSTIKSRMRDALRSLRN. The H-T-H motif DNA-binding region spans 155-174; sequence YVEVSRRLAANLSTIKSRMR.

It belongs to the sigma-70 factor family. ECF subfamily. Interacts transiently with the RNA polymerase catalytic core formed by RpoA, RpoB, RpoC and RpoZ (2 alpha, 1 beta, 1 beta' and 1 omega subunit) to form the RNA polymerase holoenzyme that can initiate transcription. Interacts (via sigma-70 factor domain 4) with anti-sigma-K factor RskA.

Its function is as follows. Sigma factors are initiation factors that promote the attachment of RNA polymerase to specific initiation sites and are then released. Extracytoplasmic function (ECF) sigma factors are held in an inactive form by an anti-sigma factor until released by regulated intramembrane proteolysis. The sequence is that of ECF RNA polymerase sigma factor SigK (sigK) from Mycobacterium tuberculosis (strain ATCC 25177 / H37Ra).